We begin with the raw amino-acid sequence, 171 residues long: Ribosome maturation factor RimM (171 aa).

The 75-residue stretch at 96–170 (AEGEYYYHEI…LVTIHVMEGL (75 aa)) folds into the PRC barrel domain.

This sequence belongs to the RimM family. Binds ribosomal protein uS19.

It is found in the cytoplasm. Functionally, an accessory protein needed during the final step in the assembly of 30S ribosomal subunit, possibly for assembly of the head region. Essential for efficient processing of 16S rRNA. May be needed both before and after RbfA during the maturation of 16S rRNA. It has affinity for free ribosomal 30S subunits but not for 70S ribosomes. The chain is Ribosome maturation factor RimM from Bacillus mycoides (strain KBAB4) (Bacillus weihenstephanensis).